The chain runs to 285 residues: Acetyl-coenzyme A carboxylase carboxyl transferase subunit beta (285 aa).

One can recognise a CoA carboxyltransferase N-terminal domain in the interval 22 to 285 (LWTKCEACGA…HPGVAYAPGV (264 aa)). Residues Cys-26, Cys-29, Cys-45, and Cys-48 each contribute to the Zn(2+) site. The segment at 26-48 (CEACGAQIYKKEFQENLHVCPKC) adopts a C4-type zinc-finger fold.

This sequence belongs to the AccD/PCCB family. Acetyl-CoA carboxylase is a heterohexamer composed of biotin carboxyl carrier protein (AccB), biotin carboxylase (AccC) and two subunits each of ACCase subunit alpha (AccA) and ACCase subunit beta (AccD). Requires Zn(2+) as cofactor.

It is found in the cytoplasm. The catalysed reaction is N(6)-carboxybiotinyl-L-lysyl-[protein] + acetyl-CoA = N(6)-biotinyl-L-lysyl-[protein] + malonyl-CoA. It functions in the pathway lipid metabolism; malonyl-CoA biosynthesis; malonyl-CoA from acetyl-CoA: step 1/1. In terms of biological role, component of the acetyl coenzyme A carboxylase (ACC) complex. Biotin carboxylase (BC) catalyzes the carboxylation of biotin on its carrier protein (BCCP) and then the CO(2) group is transferred by the transcarboxylase to acetyl-CoA to form malonyl-CoA. In Thermus thermophilus (strain ATCC BAA-163 / DSM 7039 / HB27), this protein is Acetyl-coenzyme A carboxylase carboxyl transferase subunit beta.